The chain runs to 338 residues: Ketol-acid reductoisomerase (NADP(+)) (338 aa).

The KARI N-terminal Rossmann domain maps to 1 to 181; sequence MKVYYDKDAD…GGTKGGVIET (181 aa). Residues 24–27, arginine 47, and serine 52 contribute to the NADP(+) site; that span reads YGSQ. Histidine 107 is an active-site residue. Glycine 133 is an NADP(+) binding site. The 146-residue stretch at 182–327 folds into the KARI C-terminal knotted domain; that stretch reads NFREETETDL…GQLRDMMPWI (146 aa). The Mg(2+) site is built by aspartate 190, glutamate 194, glutamate 226, and glutamate 230. Serine 251 is a binding site for substrate.

Belongs to the ketol-acid reductoisomerase family. Mg(2+) is required as a cofactor.

The catalysed reaction is (2R)-2,3-dihydroxy-3-methylbutanoate + NADP(+) = (2S)-2-acetolactate + NADPH + H(+). It carries out the reaction (2R,3R)-2,3-dihydroxy-3-methylpentanoate + NADP(+) = (S)-2-ethyl-2-hydroxy-3-oxobutanoate + NADPH + H(+). It participates in amino-acid biosynthesis; L-isoleucine biosynthesis; L-isoleucine from 2-oxobutanoate: step 2/4. The protein operates within amino-acid biosynthesis; L-valine biosynthesis; L-valine from pyruvate: step 2/4. In terms of biological role, involved in the biosynthesis of branched-chain amino acids (BCAA). Catalyzes an alkyl-migration followed by a ketol-acid reduction of (S)-2-acetolactate (S2AL) to yield (R)-2,3-dihydroxy-isovalerate. In the isomerase reaction, S2AL is rearranged via a Mg-dependent methyl migration to produce 3-hydroxy-3-methyl-2-ketobutyrate (HMKB). In the reductase reaction, this 2-ketoacid undergoes a metal-dependent reduction by NADPH to yield (R)-2,3-dihydroxy-isovalerate. The chain is Ketol-acid reductoisomerase (NADP(+)) from Dechloromonas aromatica (strain RCB).